The following is a 204-amino-acid chain: Recombination protein RecR (204 aa).

A C4-type zinc finger spans residues 63–78 (CRICFNVADSELCPIC). Residues 86–181 (NKICVVEQPQ…KVTRLARGLP (96 aa)) form the Toprim domain.

The protein belongs to the RecR family.

In terms of biological role, may play a role in DNA repair. It seems to be involved in an RecBC-independent recombinational process of DNA repair. It may act with RecF and RecO. The protein is Recombination protein RecR of Dehalococcoides mccartyi (strain ATCC BAA-2266 / KCTC 15142 / 195) (Dehalococcoides ethenogenes (strain 195)).